We begin with the raw amino-acid sequence, 364 residues long: Aminomethyltransferase (364 aa).

Belongs to the GcvT family. In terms of assembly, the glycine cleavage system is composed of four proteins: P, T, L and H.

The catalysed reaction is N(6)-[(R)-S(8)-aminomethyldihydrolipoyl]-L-lysyl-[protein] + (6S)-5,6,7,8-tetrahydrofolate = N(6)-[(R)-dihydrolipoyl]-L-lysyl-[protein] + (6R)-5,10-methylene-5,6,7,8-tetrahydrofolate + NH4(+). The glycine cleavage system catalyzes the degradation of glycine. The sequence is that of Aminomethyltransferase from Shewanella baltica (strain OS223).